The following is an 87-amino-acid chain: Small ribosomal subunit protein uS15 (87 aa).

Belongs to the universal ribosomal protein uS15 family. Part of the 30S ribosomal subunit. Forms a bridge to the 50S subunit in the 70S ribosome, contacting the 23S rRNA.

Its function is as follows. One of the primary rRNA binding proteins, it binds directly to 16S rRNA where it helps nucleate assembly of the platform of the 30S subunit by binding and bridging several RNA helices of the 16S rRNA. Forms an intersubunit bridge (bridge B4) with the 23S rRNA of the 50S subunit in the ribosome. The protein is Small ribosomal subunit protein uS15 of Clostridium botulinum (strain Eklund 17B / Type B).